The following is a 528-amino-acid chain: Na(+)/H(+) antiporter NhaB (528 aa).

The next 11 membrane-spanning stretches (helical) occupy residues 23–43, 45–65, 90–110, 136–156, 204–224, 242–262, 305–325, 350–370, 392–412, 450–470, and 479–499; these read VAII…DPFV, GWLL…CYPL, LVAN…IYFM, CFAA…AVVI, LLMH…VGEP, IRMA…CAIV, GLIA…VGLI, EEAL…AVII, LALF…VFVG, ATPN…APLI, and IMAL…IMFF.

It belongs to the NhaB Na(+)/H(+) (TC 2.A.34) antiporter family.

The protein resides in the cell inner membrane. It carries out the reaction 2 Na(+)(in) + 3 H(+)(out) = 2 Na(+)(out) + 3 H(+)(in). Na(+)/H(+) antiporter that extrudes sodium in exchange for external protons. This is Na(+)/H(+) antiporter NhaB from Vibrio campbellii (strain ATCC BAA-1116).